Consider the following 322-residue polypeptide: Ferredoxin--NADP reductase (322 aa).

7 residues coordinate FAD: aspartate 34, glutamine 42, tyrosine 47, valine 87, phenylalanine 120, aspartate 279, and threonine 320.

This sequence belongs to the ferredoxin--NADP reductase type 2 family. Homodimer. FAD is required as a cofactor.

It catalyses the reaction 2 reduced [2Fe-2S]-[ferredoxin] + NADP(+) + H(+) = 2 oxidized [2Fe-2S]-[ferredoxin] + NADPH. The chain is Ferredoxin--NADP reductase from Streptococcus gordonii (strain Challis / ATCC 35105 / BCRC 15272 / CH1 / DL1 / V288).